Consider the following 273-residue polypeptide: MKNSSIRIAVVGAGGRMGRQLIQAIEQMDGVVLGAALERSGSSLIGSDAGELAGLGKSGITVKESLNAVQNDFDILIDFTRPEGTLAHLAFCHQHRKGMIIGTTGFDDAGKAAIKQAAQDIGIVFAANFSVGVNVMLKLLEKAAKVMGDYTDIEIIEAHHRHKVDAPSGTALAMGEAIADALGRDLKSCAVYAREGHTGERDPKSIGFATVRAGDIVGEHTAMFADIGERVEITHKASSRMTFANGAVRAAIWISSKENGLFDMRDVLSLDDL.

Residues Gly-12 to Met-17 and Glu-38 each bind NAD(+). Arg-39 serves as a coordination point for NADP(+). NAD(+) contacts are provided by residues Gly-102–Thr-104 and Ala-126–Phe-129. The Proton donor/acceptor role is filled by His-159. His-160 contributes to the (S)-2,3,4,5-tetrahydrodipicolinate binding site. Lys-163 (proton donor) is an active-site residue. Gly-169–Thr-170 contacts (S)-2,3,4,5-tetrahydrodipicolinate.

It belongs to the DapB family. As to quaternary structure, homotetramer.

Its subcellular location is the cytoplasm. It catalyses the reaction (S)-2,3,4,5-tetrahydrodipicolinate + NAD(+) + H2O = (2S,4S)-4-hydroxy-2,3,4,5-tetrahydrodipicolinate + NADH + H(+). The catalysed reaction is (S)-2,3,4,5-tetrahydrodipicolinate + NADP(+) + H2O = (2S,4S)-4-hydroxy-2,3,4,5-tetrahydrodipicolinate + NADPH + H(+). It functions in the pathway amino-acid biosynthesis; L-lysine biosynthesis via DAP pathway; (S)-tetrahydrodipicolinate from L-aspartate: step 4/4. In terms of biological role, catalyzes the conversion of 4-hydroxy-tetrahydrodipicolinate (HTPA) to tetrahydrodipicolinate. The protein is 4-hydroxy-tetrahydrodipicolinate reductase of Pectobacterium carotovorum subsp. carotovorum (strain PC1).